Reading from the N-terminus, the 349-residue chain is Phosphoribosylformylglycinamidine cyclo-ligase (349 aa).

It belongs to the AIR synthase family.

It localises to the cytoplasm. The catalysed reaction is 2-formamido-N(1)-(5-O-phospho-beta-D-ribosyl)acetamidine + ATP = 5-amino-1-(5-phospho-beta-D-ribosyl)imidazole + ADP + phosphate + H(+). Its pathway is purine metabolism; IMP biosynthesis via de novo pathway; 5-amino-1-(5-phospho-D-ribosyl)imidazole from N(2)-formyl-N(1)-(5-phospho-D-ribosyl)glycinamide: step 2/2. This Albidiferax ferrireducens (strain ATCC BAA-621 / DSM 15236 / T118) (Rhodoferax ferrireducens) protein is Phosphoribosylformylglycinamidine cyclo-ligase.